A 179-amino-acid polypeptide reads, in one-letter code: Large ribosomal subunit protein uL5 (179 aa).

This sequence belongs to the universal ribosomal protein uL5 family. As to quaternary structure, part of the 50S ribosomal subunit; part of the 5S rRNA/L5/L18/L25 subcomplex. Contacts the 5S rRNA and the P site tRNA. Forms a bridge to the 30S subunit in the 70S ribosome.

In terms of biological role, this is one of the proteins that bind and probably mediate the attachment of the 5S RNA into the large ribosomal subunit, where it forms part of the central protuberance. In the 70S ribosome it contacts protein S13 of the 30S subunit (bridge B1b), connecting the 2 subunits; this bridge is implicated in subunit movement. Contacts the P site tRNA; the 5S rRNA and some of its associated proteins might help stabilize positioning of ribosome-bound tRNAs. The sequence is that of Large ribosomal subunit protein uL5 from Pseudomonas putida (strain W619).